A 178-amino-acid polypeptide reads, in one-letter code: Matrix-remodeling-associated protein 7 (178 aa).

Residues 7 to 27 (LLAALPALVTALALLLAWLLL) traverse the membrane as a helical segment. The interval 33–121 (RVPAPESTAS…AFSFKYSPGQ (89 aa)) is disordered. Pro residues predominate over residues 48–65 (APAPPEPPESCAPEPAPE). A compositionally biased stretch (acidic residues) spans 76-85 (PEESEAEEPA). Phosphoserine is present on residues serine 79 and serine 165.

The protein resides in the membrane. This is Matrix-remodeling-associated protein 7 (Mxra7) from Mus musculus (Mouse).